Consider the following 374-residue polypeptide: DNA replication and repair protein RecF (374 aa).

30 to 37 lines the ATP pocket; it reads GENAQGKT.

This sequence belongs to the RecF family.

It is found in the cytoplasm. The RecF protein is involved in DNA metabolism; it is required for DNA replication and normal SOS inducibility. RecF binds preferentially to single-stranded, linear DNA. It also seems to bind ATP. The sequence is that of DNA replication and repair protein RecF from Pediococcus pentosaceus (strain ATCC 25745 / CCUG 21536 / LMG 10740 / 183-1w).